Reading from the N-terminus, the 340-residue chain is Protein RecA (340 aa).

66-73 (GPESSGKT) contacts ATP.

Belongs to the RecA family.

It is found in the cytoplasm. Can catalyze the hydrolysis of ATP in the presence of single-stranded DNA, the ATP-dependent uptake of single-stranded DNA by duplex DNA, and the ATP-dependent hybridization of homologous single-stranded DNAs. It interacts with LexA causing its activation and leading to its autocatalytic cleavage. The sequence is that of Protein RecA from Rickettsia prowazekii (strain Madrid E).